The primary structure comprises 279 residues: Non-structural protein 2 (279 aa).

ATP-binding positions include 119–121 (DVL), K201, and 229–231 (HGH). The interval 214-249 (MLALKAVAGNQFFMYHGHGHIRTVPYHELLTLSNHS) is RNA-binding. The active-site For NTPase and RTPase activities is H233. An ATP-binding site is contributed by R235.

It belongs to the rotavirus NSP2 family. In terms of assembly, homooctamer. Interacts with VP1; this interaction is weak. Interacts with NSP5; this interaction leads to up-regulation of NSP5 phosphorylation and formation of viral factories. Mg(2+) serves as cofactor.

It localises to the host cytoplasm. Participates in replication and packaging of the viral genome. Plays a crucial role, together with NSP5, in the formation of virus factories (viroplasms) which are large inclusions in the host cytoplasm where replication intermediates are assembled and viral RNA replication takes place. Displays ssRNA binding, NTPase, RNA triphosphatase (RTPase) and ATP-independent helix-unwinding activities. The unwinding activity may prepare and organize plus-strand RNAs for packaging and replication by removing interfering secondary structures. The RTPase activity plays a role in the removal of the gamma-phosphate from the rotavirus RNA minus strands of dsRNA genome segments. This is Non-structural protein 2 from Homo sapiens (Human).